We begin with the raw amino-acid sequence, 202 residues long: MIVVIDYGVGNIASVLNMLKRVGAKAKASDSREDIEQAEKLILPGVGAFDAGMQTLRKSGLVDVLTEQVMIKRKPVMGVCLGSQMLGLRSEEGAEPGLGWIDMDSVRFERRDDRKVPHMGWNQVSPQLEHPILSGINEQSRFYFVHSYYMVPKDPDDILLSCNYGQKFTAAVARDNVFGFQFHPEKSHKFGMQLFKNFVELV.

Positions 1–202 constitute a Glutamine amidotransferase type-1 domain; that stretch reads MIVVIDYGVG…QLFKNFVELV (202 aa). Catalysis depends on cysteine 80, which acts as the Nucleophile. Residues histidine 183 and glutamate 185 contribute to the active site.

As to quaternary structure, heterodimer of HisH and HisF.

Its subcellular location is the cytoplasm. It catalyses the reaction 5-[(5-phospho-1-deoxy-D-ribulos-1-ylimino)methylamino]-1-(5-phospho-beta-D-ribosyl)imidazole-4-carboxamide + L-glutamine = D-erythro-1-(imidazol-4-yl)glycerol 3-phosphate + 5-amino-1-(5-phospho-beta-D-ribosyl)imidazole-4-carboxamide + L-glutamate + H(+). The enzyme catalyses L-glutamine + H2O = L-glutamate + NH4(+). Its pathway is amino-acid biosynthesis; L-histidine biosynthesis; L-histidine from 5-phospho-alpha-D-ribose 1-diphosphate: step 5/9. In terms of biological role, IGPS catalyzes the conversion of PRFAR and glutamine to IGP, AICAR and glutamate. The HisH subunit catalyzes the hydrolysis of glutamine to glutamate and ammonia as part of the synthesis of IGP and AICAR. The resulting ammonia molecule is channeled to the active site of HisF. The sequence is that of Imidazole glycerol phosphate synthase subunit HisH 2 (hisH2) from Pseudomonas aeruginosa (strain ATCC 15692 / DSM 22644 / CIP 104116 / JCM 14847 / LMG 12228 / 1C / PRS 101 / PAO1).